The primary structure comprises 385 residues: Neuropeptide Y receptor type 2 (385 aa).

The Extracellular portion of the chain corresponds to 1–54 (MGPLEAIGEENQTDEMKMELFTKLYLPRYTTPVSELALDPKPELKDSTTLVEVQ). N-linked (GlcNAc...) asparagine glycosylation occurs at Asn-11. Residues 55 to 75 (IILIFAYCSIILLGVIGNSLV) traverse the membrane as a helical segment. The Cytoplasmic portion of the chain corresponds to 76–90 (IHVIIKFKSMRTVTN). A helical membrane pass occupies residues 91 to 111 (FFIANLAVADLLVNTLCLPFT). Over 112–128 (LVYTLLGEWKLGPVLCH) the chain is Extracellular. Cys-127 and Cys-207 form a disulfide bridge. Residues 129 to 149 (LVPYAQALAVHVSTVTLTVIA) traverse the membrane as a helical segment. The Cytoplasmic portion of the chain corresponds to 150 to 169 (LDRHRCIVYHLESKISKRIS). Residues 170–190 (FLIIGVAWAVSALLASPLAIF) form a helical membrane-spanning segment. The Extracellular portion of the chain corresponds to 191–221 (REYSLIEIIPDFKIVVCSEKWPGEGQLNYGT). A helical transmembrane segment spans residues 222–242 (IYSVSMLLIQYVLPLAIISYA). At 243–273 (YTRIWTKLKNHVSPGAGNDHYHHRRQKTTKM) the chain is on the cytoplasmic side. A helical membrane pass occupies residues 274–294 (LVCVVVVFAVSWLPFHAFQLV). Over 295 to 308 (SDIDSQVLDLKEYK) the chain is Extracellular. The helical transmembrane segment at 309-329 (LIYTVFHVIAMCSTFANPLLY) threads the bilayer. Over 330–385 (GWMNNNYRTAFLTAFQCEQRLDSIHPEVSAAFKARKKLEAKKSQFPGDSFTQPTNV) the chain is Cytoplasmic. Cys-346 is lipidated: S-palmitoyl cysteine.

Belongs to the G-protein coupled receptor 1 family.

The protein localises to the cell membrane. Receptor for neuropeptide Y and peptide YY. The protein is Neuropeptide Y receptor type 2 (NPY2R) of Gallus gallus (Chicken).